A 316-amino-acid polypeptide reads, in one-letter code: Low affinity immunoglobulin gamma Fc region receptor II-a (316 aa).

A signal peptide spans Met1 to Ala35. Residues Ala36–Gly216 lie on the Extracellular side of the membrane. 2 Ig-like C2-type domains span residues Pro38–Thr117 and Glu121–Thr203. 2 cysteine pairs are disulfide-bonded: Cys61–Cys103 and Cys142–Cys186. Asn96, Asn170, and Asn177 each carry an N-linked (GlcNAc...) asparagine glycan. A helical membrane pass occupies residues Ile217–Tyr239. The Cytoplasmic portion of the chain corresponds to Cys240–Asn316. A phosphotyrosine; by SRC-type Tyr-kinases mark is found at Tyr287 and Tyr303.

In terms of assembly, interacts with INPP5D/SHIP1 and INPPL1/SHIP2, regulating its function. Interacts with APCS and FGR. Interacts with HCK. Phosphorylated by SRC-type Tyr-kinases such as HCK, LYN, BLK, FYN and SYK.

The protein localises to the cell membrane. Its function is as follows. Binds to the Fc region of immunoglobulins gamma. Low affinity receptor. By binding to IgG it initiates cellular responses against pathogens and soluble antigens. Promotes phagocytosis of opsonized antigens. This is Low affinity immunoglobulin gamma Fc region receptor II-a (FCGR2A) from Pan troglodytes (Chimpanzee).